Reading from the N-terminus, the 238-residue chain is Large ribosomal subunit protein uL1 (238 aa).

A disordered region spans residues 217 to 238 (TNGPGVPVDETIQKNYADDAEA).

Belongs to the universal ribosomal protein uL1 family. In terms of assembly, part of the 50S ribosomal subunit.

Functionally, binds directly to 23S rRNA. The L1 stalk is quite mobile in the ribosome, and is involved in E site tRNA release. Its function is as follows. Protein L1 is also a translational repressor protein, it controls the translation of the L11 operon by binding to its mRNA. This chain is Large ribosomal subunit protein uL1, found in Corynebacterium urealyticum (strain ATCC 43042 / DSM 7109).